The chain runs to 409 residues: Arginine deiminase (409 aa).

C399 serves as the catalytic Amidino-cysteine intermediate.

This sequence belongs to the arginine deiminase family.

It localises to the cytoplasm. The catalysed reaction is L-arginine + H2O = L-citrulline + NH4(+). The protein operates within amino-acid degradation; L-arginine degradation via ADI pathway; carbamoyl phosphate from L-arginine: step 1/2. The protein is Arginine deiminase of Streptococcus gordonii (strain Challis / ATCC 35105 / BCRC 15272 / CH1 / DL1 / V288).